A 321-amino-acid polypeptide reads, in one-letter code: Serine/threonine-protein phosphatase 4 catalytic subunit 2 (321 aa).

Mn(2+)-binding residues include D64, H66, D92, and N124. Residue H125 is the Proton donor of the active site. Mn(2+)-binding residues include H174 and H249.

This sequence belongs to the PPP phosphatase family. PP-4 (PP-X) subfamily. In terms of assembly, serine/threonine-protein phosphatase 4 (PP4) occurs in different assemblies of the catalytic and one or more regulatory subunits. Requires Mn(2+) as cofactor.

The catalysed reaction is O-phospho-L-seryl-[protein] + H2O = L-seryl-[protein] + phosphate. The enzyme catalyses O-phospho-L-threonyl-[protein] + H2O = L-threonyl-[protein] + phosphate. Protein phosphatase which seems to be involved in larval development but not essential for embryogenesis. The chain is Serine/threonine-protein phosphatase 4 catalytic subunit 2 from Caenorhabditis elegans.